We begin with the raw amino-acid sequence, 309 residues long: Protein CbbX (309 aa).

Residue G74 to T81 participates in ATP binding.

Belongs to the CbxX/CfxQ family. Forms homohexameric rings. The oligomeric transition is triggered by ribulose 1,5-biphosphate.

ATPase involved in the activation of red-type RuBisCo (ribulose-1,5-bisphosphate carboxylase/oxygenase), which tends to form inactive complexes with its substrate ribulose 1,5-bisphosphate (RuBP). Catalyzes the release of RuBP from inhibited RuBisCo in an ATP-dependent manner. Activation of RuBisCO involves the ATP-dependent carboxylation of the epsilon-amino group of lysine leading to a carbamate structure. This Cereibacter sphaeroides (Rhodobacter sphaeroides) protein is Protein CbbX (cbbX).